Reading from the N-terminus, the 138-residue chain is uncharacterized protein (138 aa).

The protein resides in the plastid. It is found in the chloroplast. This is an uncharacterized protein from Chlorella vulgaris (Green alga).